The primary structure comprises 287 residues: Leukocyte-associated immunoglobulin-like receptor 1 (287 aa).

A signal peptide spans 1-21 (MSPHPTALLGLVLCLAQTIHT). Residues 22–165 (QEEDLPRPSI…SQGLKAEHLY (144 aa)) are Extracellular-facing. The region spanning 29-117 (PSISAEPGTV…KWSEQSDYLE (89 aa)) is the Ig-like C2-type domain. Residues Cys49 and Cys101 are joined by a disulfide bond. Asn69 carries an N-linked (GlcNAc...) asparagine glycan. The segment at 121–155 (KESSGGPDSPDTEPGSSAGPTQRPSDNSHNEHAPA) is disordered. The span at 134 to 145 (PGSSAGPTQRPS) shows a compositional bias: polar residues. The helical transmembrane segment at 166–186 (ILIGVSVVFLFCLLLLVLFCL) threads the bilayer. Residues 187–287 (HRQNQIKQGP…SITYAAVARH (101 aa)) lie on the Cytoplasmic side of the membrane. The tract at residues 192–211 (IKQGPPRSKDEEQKPQQRPD) is disordered. Over residues 198–208 (RSKDEEQKPQQ) the composition is skewed to basic and acidic residues. 2 short sequence motifs (ITIM motif) span residues 249–254 (VTYAQL) and 279–284 (ITYAAV). A phosphotyrosine mark is found at Tyr251 and Tyr281.

As to quaternary structure, interacts with SH2 domains of tyrosine-protein phosphatases PTPN6 and PTPN11. The interaction with PTPN6 is constitutive. Interacts with the SH2 domain of CSK. Binds with high affinity to extracellular matrix collagens, the interaction is functionally important. Post-translationally, phosphorylation at Tyr-251 and Tyr-281 activates it. May be phosphorylated by LCK. In terms of processing, N-glycosylated. As to expression, expressed on the majority of peripheral mononuclear cells, including natural killer (NK) cells, T-cells, B-cells, monocytes, and dendritic cells. Highly expressed in naive T-cells and B-cells but no expression on germinal center B-cells. Abnormally low expression in naive B-cells from HIV-1 infected patients. Very low expression in NK cells from a patient with chronic active Epstein-Barr virus infection.

The protein localises to the cell membrane. In terms of biological role, functions as an inhibitory receptor that plays a constitutive negative regulatory role on cytolytic function of natural killer (NK) cells, B-cells and T-cells. Activation by Tyr phosphorylation results in recruitment and activation of the phosphatases PTPN6 and PTPN11. It also reduces the increase of intracellular calcium evoked by B-cell receptor ligation. May also play its inhibitory role independently of SH2-containing phosphatases. Modulates cytokine production in CD4+ T-cells, down-regulating IL2 and IFNG production while inducing secretion of transforming growth factor beta. Also down-regulates IgG and IgE production in B-cells as well as IL8, IL10 and TNF secretion. Inhibits proliferation and induces apoptosis in myeloid leukemia cell lines as well as prevents nuclear translocation of NF-kappa-B p65 subunit/RELA and phosphorylation of I-kappa-B alpha/CHUK in these cells. Inhibits the differentiation of peripheral blood precursors towards dendritic cells. This chain is Leukocyte-associated immunoglobulin-like receptor 1 (LAIR1), found in Homo sapiens (Human).